A 68-amino-acid polypeptide reads, in one-letter code: Beta-defensin 1 (68 aa).

The signal sequence occupies residues 1–21; the sequence is MRTSYLLLFTLCLLLSEMASG. Positions 22 to 32 are excised as a propeptide; sequence DNFLTGLGHRS. Intrachain disulfides connect cysteine 37-cysteine 66, cysteine 44-cysteine 59, and cysteine 49-cysteine 67.

Belongs to the beta-defensin family. As to quaternary structure, monomer. Homodimer.

It localises to the secreted. The protein resides in the membrane. Its function is as follows. Has bactericidal activity. May act as a ligand for C-C chemokine receptor CCR6. Positively regulates the sperm motility and bactericidal activity in a CCR6-dependent manner. Binds to CCR6 and triggers Ca2+ mobilization in the sperm which is important for its motility. This Hylobates moloch (Silvery gibbon) protein is Beta-defensin 1 (DEFB1).